The sequence spans 180 residues: Crossover junction endodeoxyribonuclease RuvC (180 aa).

Residues aspartate 13, glutamate 73, and aspartate 145 contribute to the active site. Mg(2+) contacts are provided by aspartate 13, glutamate 73, and aspartate 145.

This sequence belongs to the RuvC family. In terms of assembly, homodimer which binds Holliday junction (HJ) DNA. The HJ becomes 2-fold symmetrical on binding to RuvC with unstacked arms; it has a different conformation from HJ DNA in complex with RuvA. In the full resolvosome a probable DNA-RuvA(4)-RuvB(12)-RuvC(2) complex forms which resolves the HJ. It depends on Mg(2+) as a cofactor.

It is found in the cytoplasm. It carries out the reaction Endonucleolytic cleavage at a junction such as a reciprocal single-stranded crossover between two homologous DNA duplexes (Holliday junction).. Its function is as follows. The RuvA-RuvB-RuvC complex processes Holliday junction (HJ) DNA during genetic recombination and DNA repair. Endonuclease that resolves HJ intermediates. Cleaves cruciform DNA by making single-stranded nicks across the HJ at symmetrical positions within the homologous arms, yielding a 5'-phosphate and a 3'-hydroxyl group; requires a central core of homology in the junction. The consensus cleavage sequence is 5'-(A/T)TT(C/G)-3'. Cleavage occurs on the 3'-side of the TT dinucleotide at the point of strand exchange. HJ branch migration catalyzed by RuvA-RuvB allows RuvC to scan DNA until it finds its consensus sequence, where it cleaves and resolves the cruciform DNA. This chain is Crossover junction endodeoxyribonuclease RuvC, found in Magnetococcus marinus (strain ATCC BAA-1437 / JCM 17883 / MC-1).